Consider the following 1462-residue polypeptide: uncharacterized protein (1462 aa).

A helical membrane pass occupies residues 119–139 (TGYITSLCLSAILKFFSFRII). Phosphoserine occurs at positions 411 and 420. The SEC7 domain occupies 541–730 (TLIESKKRKA…SEIYKAIKEN (190 aa)). An HEAT repeat occupies 1102–1139 (ENSEDWGLFSKLCNLLNDKNIVVRNQSLSLFHQLVNKY).

It localises to the cytoplasm. It is found in the golgi apparatus membrane. This is an uncharacterized protein from Schizosaccharomyces pombe (strain 972 / ATCC 24843) (Fission yeast).